Here is a 329-residue protein sequence, read N- to C-terminus: MAYKTPFSSQFPLSSSTLPLTLISLDDWGLVTATGPDTEKYLQGQVTADISALATNQHVLSAHCDAKGKMWSNLRLFHRGESFAYIERRSVLENQLTELKKYAVFSKIALAQDENALLLGVAGKNCRQALSSFFPTLPDADNAVVAHEATTLLHFSLPSERFLLVTNTATAEQLTEKLQAQLNNSEQWLALDIEAGFPIIDAANSTQFIPQATNLQALAGGVCFKKGCYTGQEMVARAKYRGANKRGMYWLAGSASKIPMAGDDLEWQLGDKWRRTGTVLAAVKLNNDNVWIQVVMNNDMESHSVFRVRDDEGHSLTIQPLPYSLNEEK.

2 residues coordinate folate: Trp-28 and Trp-188.

Belongs to the tRNA-modifying YgfZ family.

The protein localises to the cytoplasm. Folate-binding protein involved in regulating the level of ATP-DnaA and in the modification of some tRNAs. It is probably a key factor in regulatory networks that act via tRNA modification, such as initiation of chromosomal replication. The sequence is that of tRNA-modifying protein YgfZ from Photorhabdus laumondii subsp. laumondii (strain DSM 15139 / CIP 105565 / TT01) (Photorhabdus luminescens subsp. laumondii).